A 335-amino-acid chain; its full sequence is Large ribosomal subunit protein uL10 (335 aa).

Residues 300–335 (QVSEQAAEKKEEKKEEEKKGPSEEEIGGGLSSLFGG) are disordered. Over residues 305 to 321 (AAEKKEEKKEEEKKGPS) the composition is skewed to basic and acidic residues. The segment covering 326–335 (GGGLSSLFGG) has biased composition (gly residues).

It belongs to the universal ribosomal protein uL10 family. In terms of assembly, part of the 50S ribosomal subunit. Forms part of the ribosomal stalk which helps the ribosome interact with GTP-bound translation factors. Forms a heptameric L10(L12)2(L12)2(L12)2 complex, where L10 forms an elongated spine to which the L12 dimers bind in a sequential fashion.

Functionally, forms part of the ribosomal stalk, playing a central role in the interaction of the ribosome with GTP-bound translation factors. The chain is Large ribosomal subunit protein uL10 from Sulfolobus acidocaldarius (strain ATCC 33909 / DSM 639 / JCM 8929 / NBRC 15157 / NCIMB 11770).